The sequence spans 430 residues: Na(+)/H(+) antiporter NhaA 2 (430 aa).

10 consecutive transmembrane segments (helical) span residues 11–31, 60–80, 97–117, 127–147, 181–201, 215–235, 288–308, 309–329, 356–376, and 393–413; these read FVHGESFAGLLLVGTALIAFI, LSLEHWVNDGLMAVFFLLVGL, VALAVTAALGGMLVPAALYTA, GWGVPMSTDIAFALGVLALLG, LNLTFLTLAALTWGAALYAGW, VLLWFFVLKSGLHATIAGVLL, HALHPFVTFLVLPVFALTNAG, VPVAAGGFGSVSLGVLLGLLL, WGHMVGSGLLAGIGFTMSLFV, and GVLLASVLAALLGAGWLLLGI.

The protein belongs to the NhaA Na(+)/H(+) (TC 2.A.33) antiporter family.

It localises to the cell membrane. The catalysed reaction is Na(+)(in) + 2 H(+)(out) = Na(+)(out) + 2 H(+)(in). In terms of biological role, na(+)/H(+) antiporter that extrudes sodium in exchange for external protons. The polypeptide is Na(+)/H(+) antiporter NhaA 2 (Deinococcus geothermalis (strain DSM 11300 / CIP 105573 / AG-3a)).